A 188-amino-acid chain; its full sequence is Photosystem I assembly protein Ycf4 (188 aa).

The next 2 helical transmembrane spans lie at 26–46 and 68–88; these read YFWA…GLSS and LVMG…WFVI.

It belongs to the Ycf4 family.

The protein resides in the cellular thylakoid membrane. Its function is as follows. Seems to be required for the assembly of the photosystem I complex. This is Photosystem I assembly protein Ycf4 from Synechococcus sp. (strain ATCC 27144 / PCC 6301 / SAUG 1402/1) (Anacystis nidulans).